Consider the following 416-residue polypeptide: MSVEEKVLELIRPDDKDRERLEKVAEEVLSRLKGFDAQIQGSFRKGTWLKGDTDIDIFVFYPKEVGKEYLREKSLKELIQLFQDLNYEIAFAEHPYLILKINNVEVDVVPALKIDSGEDVITAADRTPFHTKFVTTHLDEKGKDEVRLLKQFMKGIGVYGAEIKVKGFSGYVAELLTIYYGNFRKVLESAKTWKPPIKLNLVEPKRDFDEPLQIPDPVDPKRNTASAVSLRNIAVFSLASKIFIERPSIEFFFPTEIKAEEIIGDILLIKVEFKEKSVEDIIWGQVWKNVEKLKNAIKTAGFSLIDIGAWGNSQTVKIAVQIEDKNISRYYLNQGPYFYVNGVDNFMRKNKYVWVGEDGRLYSLKKRRETNLEKIVLNNLSFKENFSVEMTWLSEINQDDKELHKFLRKRPTWMQT.

Positions 42 and 45 each coordinate ATP. CTP-binding residues include Ser-42 and Lys-45. 3 residues coordinate Mg(2+): Asp-54, Asp-56, and Asp-107. Residues His-130, Lys-150, and Tyr-159 each contribute to the ATP site. Residues His-130, Lys-150, and Tyr-159 each coordinate CTP.

It belongs to the tRNA nucleotidyltransferase/poly(A) polymerase family. Archaeal CCA-adding enzyme subfamily. Homodimer. Mg(2+) is required as a cofactor.

The enzyme catalyses a tRNA precursor + 2 CTP + ATP = a tRNA with a 3' CCA end + 3 diphosphate. The catalysed reaction is a tRNA with a 3' CCA end + 2 CTP + ATP = a tRNA with a 3' CCACCA end + 3 diphosphate. Catalyzes the addition and repair of the essential 3'-terminal CCA sequence in tRNAs without using a nucleic acid template. Adds these three nucleotides in the order of C, C, and A to the tRNA nucleotide-73, using CTP and ATP as substrates and producing inorganic pyrophosphate. tRNA 3'-terminal CCA addition is required both for tRNA processing and repair. Also involved in tRNA surveillance by mediating tandem CCA addition to generate a CCACCA at the 3' terminus of unstable tRNAs. While stable tRNAs receive only 3'-terminal CCA, unstable tRNAs are marked with CCACCA and rapidly degraded. The chain is CCA-adding enzyme from Sulfolobus acidocaldarius (strain ATCC 33909 / DSM 639 / JCM 8929 / NBRC 15157 / NCIMB 11770).